A 359-amino-acid chain; its full sequence is Outer membrane protein P5 (359 aa).

The first 21 residues, 1 to 21 (MKKTAIALVVAGLAAASVAQA), serve as a signal peptide directing secretion. 8 beta stranded membrane passes run 27-37 (TFYAGVKAGQG), 64-75 (TFTYGVFGGYQI), 83-91 (LAAELGYDD), 110-121 (HGAYLSLKGSYE), 126-134 (LDVYGKAGV), 164-173 (GLFAVGAEYA), 178-185 (LAVRLEYQ), and 211-219 (CINAGISYR). The OmpA-like domain occupies 233–359 (MVSKTFSLNS…RVEIAVNGTK (127 aa)). Cysteine 332 and cysteine 344 form a disulfide bridge.

This sequence belongs to the outer membrane OOP (TC 1.B.6) superfamily. OmpA family. In terms of assembly, monomer and homodimer.

Its subcellular location is the cell outer membrane. It localises to the fimbrium. Functionally, acts as a fimbriae subunit, allowing adhesion to host cells. In terms of biological role, with TolR probably plays a role in maintaining the position of the peptidoglycan cell wall in the periplasm. Acts as a porin with low permeability that allows slow penetration of small solutes; an internal gate slows down solute passage. The protein is Outer membrane protein P5 of Haemophilus influenzae.